The sequence spans 213 residues: Orotate phosphoribosyltransferase (213 aa).

Residue Lys26 coordinates 5-phospho-alpha-D-ribose 1-diphosphate. Residue 34–35 (FF) participates in orotate binding. 5-phospho-alpha-D-ribose 1-diphosphate contacts are provided by residues 72–73 (YK), Arg99, Lys100, Lys103, His105, and 124–132 (DDVITAGTS). The orotate site is built by Thr128 and Arg156.

This sequence belongs to the purine/pyrimidine phosphoribosyltransferase family. PyrE subfamily. In terms of assembly, homodimer. Requires Mg(2+) as cofactor.

It catalyses the reaction orotidine 5'-phosphate + diphosphate = orotate + 5-phospho-alpha-D-ribose 1-diphosphate. Its pathway is pyrimidine metabolism; UMP biosynthesis via de novo pathway; UMP from orotate: step 1/2. Functionally, catalyzes the transfer of a ribosyl phosphate group from 5-phosphoribose 1-diphosphate to orotate, leading to the formation of orotidine monophosphate (OMP). The sequence is that of Orotate phosphoribosyltransferase from Methylococcus capsulatus (strain ATCC 33009 / NCIMB 11132 / Bath).